The following is a 211-amino-acid chain: UPF0329 protein ECU07_1880/ECU10_0020 (211 aa).

The protein belongs to the UPF0329 family.

The protein is UPF0329 protein ECU07_1880/ECU10_0020 of Encephalitozoon cuniculi (strain GB-M1) (Microsporidian parasite).